Reading from the N-terminus, the 394-residue chain is Elongation factor Tu 1 (394 aa).

The 196-residue stretch at 9–204 (KPHCNIGTIG…AIDDYIPQPT (196 aa)) folds into the tr-type G domain. The segment at 18-25 (GHVDHGKT) is G1. Residue 18–25 (GHVDHGKT) participates in GTP binding. T25 lines the Mg(2+) pocket. The interval 61–65 (GITIQ) is G2. Positions 82–85 (DCPG) are G3. GTP contacts are provided by residues 82–86 (DCPGH) and 137–140 (NKID). The segment at 137 to 140 (NKID) is G4. The tract at residues 174 to 176 (SAL) is G5.

Belongs to the TRAFAC class translation factor GTPase superfamily. Classic translation factor GTPase family. EF-Tu/EF-1A subfamily. Monomer.

The protein resides in the cytoplasm. It catalyses the reaction GTP + H2O = GDP + phosphate + H(+). GTP hydrolase that promotes the GTP-dependent binding of aminoacyl-tRNA to the A-site of ribosomes during protein biosynthesis. The chain is Elongation factor Tu 1 from Orientia tsutsugamushi (strain Boryong) (Rickettsia tsutsugamushi).